Reading from the N-terminus, the 1216-residue chain is ATP-dependent helicase/nuclease subunit A (1216 aa).

Residues 26–488 (QKKTAEQIEA…IILKENFRSS (463 aa)) form the UvrD-like helicase ATP-binding domain. Position 47-54 (47-54 (ASAGSGKT)) interacts with ATP. Positions 515–802 (KHQLVFANTK…ELMTIHKSKG (288 aa)) constitute a UvrD-like helicase C-terminal domain.

The protein belongs to the helicase family. AddA subfamily. In terms of assembly, heterodimer of AddA and AddB/RexB. Mg(2+) serves as cofactor.

It catalyses the reaction Couples ATP hydrolysis with the unwinding of duplex DNA by translocating in the 3'-5' direction.. The catalysed reaction is ATP + H2O = ADP + phosphate + H(+). Its function is as follows. The heterodimer acts as both an ATP-dependent DNA helicase and an ATP-dependent, dual-direction single-stranded exonuclease. Recognizes the chi site generating a DNA molecule suitable for the initiation of homologous recombination. The AddA nuclease domain is required for chi fragment generation; this subunit has the helicase and 3' -&gt; 5' nuclease activities. This Streptococcus pneumoniae serotype 2 (strain D39 / NCTC 7466) protein is ATP-dependent helicase/nuclease subunit A.